The sequence spans 378 residues: Probable tRNA sulfurtransferase (378 aa).

In terms of domain architecture, THUMP spans 51-153; the sequence is DANLEKLQYV…SDKTYLFSKT (103 aa). ATP contacts are provided by residues 171–172, 196–197, Arg253, Gly275, and Gln284; these read LM and SF.

The protein belongs to the ThiI family.

Its subcellular location is the cytoplasm. It catalyses the reaction [ThiI sulfur-carrier protein]-S-sulfanyl-L-cysteine + a uridine in tRNA + 2 reduced [2Fe-2S]-[ferredoxin] + ATP + H(+) = [ThiI sulfur-carrier protein]-L-cysteine + a 4-thiouridine in tRNA + 2 oxidized [2Fe-2S]-[ferredoxin] + AMP + diphosphate. The catalysed reaction is [ThiS sulfur-carrier protein]-C-terminal Gly-Gly-AMP + S-sulfanyl-L-cysteinyl-[cysteine desulfurase] + AH2 = [ThiS sulfur-carrier protein]-C-terminal-Gly-aminoethanethioate + L-cysteinyl-[cysteine desulfurase] + A + AMP + 2 H(+). The protein operates within cofactor biosynthesis; thiamine diphosphate biosynthesis. Functionally, catalyzes the ATP-dependent transfer of a sulfur to tRNA to produce 4-thiouridine in position 8 of tRNAs, which functions as a near-UV photosensor. Also catalyzes the transfer of sulfur to the sulfur carrier protein ThiS, forming ThiS-thiocarboxylate. This is a step in the synthesis of thiazole, in the thiamine biosynthesis pathway. The sulfur is donated as persulfide by IscS. This Mycoplasmopsis agalactiae (strain NCTC 10123 / CIP 59.7 / PG2) (Mycoplasma agalactiae) protein is Probable tRNA sulfurtransferase.